Here is a 152-residue protein sequence, read N- to C-terminus: Deoxyuridine 5'-triphosphate nucleotidohydrolase (152 aa).

Residues 71–73, Asn-84, 88–90, and Met-98 each bind substrate; these read RSG and LID.

Belongs to the dUTPase family. It depends on Mg(2+) as a cofactor.

It carries out the reaction dUTP + H2O = dUMP + diphosphate + H(+). It functions in the pathway pyrimidine metabolism; dUMP biosynthesis; dUMP from dCTP (dUTP route): step 2/2. Its function is as follows. This enzyme is involved in nucleotide metabolism: it produces dUMP, the immediate precursor of thymidine nucleotides and it decreases the intracellular concentration of dUTP so that uracil cannot be incorporated into DNA. This chain is Deoxyuridine 5'-triphosphate nucleotidohydrolase, found in Haemophilus ducreyi (strain 35000HP / ATCC 700724).